We begin with the raw amino-acid sequence, 60 residues long: Large ribosomal subunit protein uL30 (60 aa).

Belongs to the universal ribosomal protein uL30 family. As to quaternary structure, part of the 50S ribosomal subunit.

This chain is Large ribosomal subunit protein uL30, found in Aromatoleum aromaticum (strain DSM 19018 / LMG 30748 / EbN1) (Azoarcus sp. (strain EbN1)).